Reading from the N-terminus, the 508-residue chain is Aspartic proteinase A3 (508 aa).

The signal sequence occupies residues 1 to 25 (MGTRFQSFLLVFLLSCLILISTASC). A propeptide spans 26 to 69 (ERNGDGTIRIGLKKRKLDRSNRLASQLFLKNRGSHWSPKHYFRL) (activation peptide). Residues 87 to 505 (YYGDITIGTP…DYGKGRVGFA (419 aa)) form the Peptidase A1 domain. D105 is an active-site residue. 2 disulfides stabilise this stretch: C118/C124 and C283/C287. The active site involves D292. The Saposin B-type domain maps to 317–419 (IVSRECKAVV…AELCDHIPTQ (103 aa)). Intrachain disulfides connect C322/C413, C347/C385, C353/C382, and C427/C464. N-linked (GlcNAc...) asparagine glycosylation occurs at N399.

It belongs to the peptidase A1 family. Expressed in petals, carpels and seed pods.

It is found in the secreted. Its function is as follows. Involved in the processing and degradation of storage proteins. The protein is Aspartic proteinase A3 (APA3) of Arabidopsis thaliana (Mouse-ear cress).